A 494-amino-acid polypeptide reads, in one-letter code: Maintenance of mitochondrial morphology protein 1 (494 aa).

Topologically, residues Met1 to Gly22 are lumenal. A helical transmembrane segment spans residues Phe23–Phe43. Residues Gly44–Gly494 are Cytoplasmic-facing. Disordered regions lie at residues Pro50–Thr98, Pro274–Val330, Val398–Glu426, and Val449–Gly494. The segment covering Leu54 to Ser64 has biased composition (basic residues). 2 stretches are compositionally biased toward polar residues: residues Asn65–Gly76 and Ser85–Thr98. Residues Gln130–Pro387 form the SMP-LTD domain. Over residues Pro274 to Pro286 the composition is skewed to pro residues. Polar residues-rich tracts occupy residues Thr406–Ser416 and Arg466–Leu477.

It belongs to the MMM1 family. In terms of assembly, homodimer. Component of the ER-mitochondria encounter structure (ERMES) or MDM complex, composed of mmm1, mdm10, mdm12 and mdm34. A mmm1 homodimer associates with one molecule of mdm12 on each side in a pairwise head-to-tail manner, and the SMP-LTD domains of mmm1 and mdm12 generate a continuous hydrophobic tunnel for phospholipid trafficking.

The protein resides in the endoplasmic reticulum membrane. Component of the ERMES/MDM complex, which serves as a molecular tether to connect the endoplasmic reticulum (ER) and mitochondria. Components of this complex are involved in the control of mitochondrial shape and protein biogenesis, and function in nonvesicular lipid trafficking between the ER and mitochondria. The mdm12-mmm1 subcomplex functions in the major beta-barrel assembly pathway that is responsible for biogenesis of all outer membrane beta-barrel proteins, and acts in a late step after the SAM complex. The mdm10-mdm12-mmm1 subcomplex further acts in the TOM40-specific pathway after the action of the mdm12-mmm1 complex. Essential for establishing and maintaining the structure of mitochondria and maintenance of mtDNA nucleoids. The protein is Maintenance of mitochondrial morphology protein 1 of Aspergillus clavatus (strain ATCC 1007 / CBS 513.65 / DSM 816 / NCTC 3887 / NRRL 1 / QM 1276 / 107).